A 219-amino-acid chain; its full sequence is Ribose-5-phosphate isomerase A (219 aa).

Substrate-binding positions include 28–31 (TGST), 81–84 (DGAD), and 94–97 (KGGG). The Proton acceptor role is filled by E103. K121 provides a ligand contact to substrate.

Belongs to the ribose 5-phosphate isomerase family. As to quaternary structure, homodimer.

The catalysed reaction is aldehydo-D-ribose 5-phosphate = D-ribulose 5-phosphate. It functions in the pathway carbohydrate degradation; pentose phosphate pathway; D-ribose 5-phosphate from D-ribulose 5-phosphate (non-oxidative stage): step 1/1. Catalyzes the reversible conversion of ribose-5-phosphate to ribulose 5-phosphate. The protein is Ribose-5-phosphate isomerase A of Pectobacterium carotovorum subsp. carotovorum (strain PC1).